The primary structure comprises 947 residues: Transcriptional regulator WAR1 (947 aa).

Positions 1 to 10 (MSDTTPEKGS) are enriched in basic and acidic residues. The segment at 1–52 (MSDTTPEKGSVDSVSPSASNGSNTNNPLNNSSPQPLKSNESDKKPKVTRRSV) is disordered. Residues 19–38 (SNGSNTNNPLNNSSPQPLKS) show a composition bias toward low complexity. Residues 54–86 (CKSCHSLKVKCTPSDPNNPSAPCVRCINANRIC) constitute a DNA-binding region (zn(2)-C6 fungal-type). The disordered stretch occupies residues 96–222 (RRKKSEILEA…SPTSKDDEIN (127 aa)). A compositionally biased stretch (low complexity) spans 129–142 (NSSENYSSSINNAN). Polar residues-rich tracts occupy residues 143–158 (DSSL…TFDP) and 167–185 (QASS…QSAA).

As to quaternary structure, homodimer.

The protein localises to the nucleus. Transcription factor required for yeast cell adherence to silicone substrate. Plays a role in resistance to weak organic acids such as acetate and sorbate. Binds in vitro to a nitric oxide-responsive element (NORE) but seems not to be involved in response to nitrosative stress. The sequence is that of Transcriptional regulator WAR1 (WAR1) from Candida albicans (strain SC5314 / ATCC MYA-2876) (Yeast).